The sequence spans 124 residues: Histone H2A (124 aa).

The segment covering 1-18 has biased composition (basic residues); the sequence is MSGRGKGGKAKGKSKTRS. The interval 1–23 is disordered; it reads MSGRGKGGKAKGKSKTRSSRAGL. Serine 2 bears the N-acetylserine mark. Serine 2 carries the post-translational modification Phosphoserine. At glutamine 104 the chain carries N5-methylglutamine.

This sequence belongs to the histone H2A family. In terms of assembly, the nucleosome is a histone octamer containing two molecules each of H2A, H2B, H3 and H4 assembled in one H3-H4 heterotetramer and two H2A-H2B heterodimers. The octamer wraps approximately 147 bp of DNA. In terms of processing, phosphorylation of Ser-2 directly represses transcription.

It is found in the nucleus. It localises to the chromosome. In terms of biological role, core component of nucleosome. Nucleosomes wrap and compact DNA into chromatin, limiting DNA accessibility to the cellular machineries which require DNA as a template. Histones thereby play a central role in transcription regulation, DNA repair, DNA replication and chromosomal stability. DNA accessibility is regulated via a complex set of post-translational modifications of histones, also called histone code, and nucleosome remodeling. This is Histone H2A from Platynereis dumerilii (Dumeril's clam worm).